The following is a 154-amino-acid chain: Urease accessory protein UreE (154 aa).

The tract at residues 135–154 (PENGAYHGTGGHHHHHHDHE) is disordered. The segment covering 144 to 154 (GGHHHHHHDHE) has biased composition (basic residues).

The protein belongs to the UreE family.

The protein resides in the cytoplasm. Involved in urease metallocenter assembly. Binds nickel. Probably functions as a nickel donor during metallocenter assembly. This chain is Urease accessory protein UreE, found in Teredinibacter turnerae (strain ATCC 39867 / T7901).